Consider the following 205-residue polypeptide: N-(5'-phosphoribosyl)anthranilate isomerase (205 aa).

Belongs to the TrpF family.

It catalyses the reaction N-(5-phospho-beta-D-ribosyl)anthranilate = 1-(2-carboxyphenylamino)-1-deoxy-D-ribulose 5-phosphate. It functions in the pathway amino-acid biosynthesis; L-tryptophan biosynthesis; L-tryptophan from chorismate: step 3/5. The protein is N-(5'-phosphoribosyl)anthranilate isomerase of Acidithiobacillus ferrooxidans (strain ATCC 23270 / DSM 14882 / CIP 104768 / NCIMB 8455) (Ferrobacillus ferrooxidans (strain ATCC 23270)).